The following is a 280-amino-acid chain: Mediator of RNA polymerase II transcription subunit 2 (280 aa).

The disordered stretch occupies residues 212–247; sequence GLQNTSGGNEKKNDPQINFNDTNAPPSAVNVPENGN. Positions 226-236 are enriched in polar residues; the sequence is PQINFNDTNAP.

It belongs to the Mediator complex subunit 2 family. As to quaternary structure, component of the Mediator complex.

The protein localises to the nucleus. Component of the Mediator complex, a coactivator involved in the regulated transcription of nearly all RNA polymerase II-dependent genes. Mediator functions as a bridge to convey information from gene-specific regulatory proteins to the basal RNA polymerase II transcription machinery. Mediator is recruited to promoters by direct interactions with regulatory proteins and serves as a scaffold for the assembly of a functional preinitiation complex with RNA polymerase II and the general transcription factors. This chain is Mediator of RNA polymerase II transcription subunit 2 (MED2), found in Kluyveromyces lactis (strain ATCC 8585 / CBS 2359 / DSM 70799 / NBRC 1267 / NRRL Y-1140 / WM37) (Yeast).